The primary structure comprises 441 residues: Serine hydroxymethyltransferase (441 aa).

Position 124 to 126 (124 to 126) interacts with (6S)-5,6,7,8-tetrahydrofolate; sequence GHI. Lys-239 is modified (N6-(pyridoxal phosphate)lysine).

This sequence belongs to the SHMT family. In terms of assembly, homodimer. Pyridoxal 5'-phosphate is required as a cofactor.

The protein localises to the cytoplasm. It functions in the pathway amino-acid biosynthesis; glycine biosynthesis; glycine from L-serine: step 1/1. Catalyzes the reversible interconversion of serine and glycine with a modified folate serving as the one-carbon carrier. Also exhibits a pteridine-independent aldolase activity toward beta-hydroxyamino acids, producing glycine and aldehydes, via a retro-aldol mechanism. The chain is Serine hydroxymethyltransferase from Cenarchaeum symbiosum (strain A).